The chain runs to 159 residues: MNIQIVTVGKLKEKYLVQGIAEYLKRLGAYAKVTIVEVPDEKAPEVLSDAEMKQVKDKEGARILAKIPDDAHVIALAIDGKMKSSEEFAADLDKLATYGKSKVTFVIGGSLGLSEAVLKRSNERISFGRLTLPHQLMRLVLVEQVYRAFRIVRGEPYHK.

S-adenosyl-L-methionine-binding positions include L76, G108, and 127-132 (FGRLTL).

It belongs to the RNA methyltransferase RlmH family. As to quaternary structure, homodimer.

It is found in the cytoplasm. It catalyses the reaction pseudouridine(1915) in 23S rRNA + S-adenosyl-L-methionine = N(3)-methylpseudouridine(1915) in 23S rRNA + S-adenosyl-L-homocysteine + H(+). Its function is as follows. Specifically methylates the pseudouridine at position 1915 (m3Psi1915) in 23S rRNA. The sequence is that of Ribosomal RNA large subunit methyltransferase H from Listeria monocytogenes serotype 4a (strain HCC23).